Reading from the N-terminus, the 303-residue chain is Enoyl-CoA hydratase domain-containing protein 3, mitochondrial (303 aa).

Residues 1-17 (MAAVAVLRAFGASGPMC) constitute a mitochondrion transit peptide. Position 110 is an N6-succinyllysine (K110).

It belongs to the enoyl-CoA hydratase/isomerase family. Expressed in adipocytes. Expressed in blood cells, with higher expression in patients with low coronary lesions.

Its subcellular location is the mitochondrion. Functionally, may play a role in fatty acid biosynthesis and insulin sensitivity. This Homo sapiens (Human) protein is Enoyl-CoA hydratase domain-containing protein 3, mitochondrial.